The following is a 188-amino-acid chain: Elongation factor P (188 aa).

Lys-34 carries the post-translational modification N6-(3,6-diaminohexanoyl)-5-hydroxylysine.

The protein belongs to the elongation factor P family. In terms of processing, may be beta-lysylated on the epsilon-amino group of Lys-34 by the combined action of EpmA and EpmB, and then hydroxylated on the C5 position of the same residue by EpmC (if this protein is present). Lysylation is critical for the stimulatory effect of EF-P on peptide-bond formation. The lysylation moiety may extend toward the peptidyltransferase center and stabilize the terminal 3-CCA end of the tRNA. Hydroxylation of the C5 position on Lys-34 may allow additional potential stabilizing hydrogen-bond interactions with the P-tRNA.

The protein resides in the cytoplasm. It participates in protein biosynthesis; polypeptide chain elongation. In terms of biological role, involved in peptide bond synthesis. Alleviates ribosome stalling that occurs when 3 or more consecutive Pro residues or the sequence PPG is present in a protein, possibly by augmenting the peptidyl transferase activity of the ribosome. Modification of Lys-34 is required for alleviation. The sequence is that of Elongation factor P from Aliivibrio fischeri (strain ATCC 700601 / ES114) (Vibrio fischeri).